The primary structure comprises 70 residues: DNA gyrase inhibitor YacG (70 aa).

Residues Cys-9, Cys-12, Cys-28, and Cys-32 each contribute to the Zn(2+) site. The tract at residues 43–70 is disordered; it reads ESRKIPGSSIDPESIVTSNNKQDNVDEQ.

This sequence belongs to the DNA gyrase inhibitor YacG family. Interacts with GyrB. It depends on Zn(2+) as a cofactor.

Its function is as follows. Inhibits all the catalytic activities of DNA gyrase by preventing its interaction with DNA. Acts by binding directly to the C-terminal domain of GyrB, which probably disrupts DNA binding by the gyrase. The chain is DNA gyrase inhibitor YacG from Legionella pneumophila (strain Lens).